The sequence spans 2130 residues: Dedicator of cytokinesis protein 7 (2130 aa).

Ser30 carries the phosphoserine modification. A disordered region spans residues Gly137–Asp175. A phosphoserine mark is found at Ser180 and Ser182. The stretch at Phe365–Arg395 forms a coiled coil. Residue Lys381 is modified to N6-methyllysine. Thr450 carries the phosphothreonine modification. A Phosphoserine modification is found at Ser452. A C2 DOCK-type domain is found at Arg561–Val727. Phosphoserine occurs at positions 862, 864, 882, 888, 896, 900, and 905. Over residues Ser888–Asn901 the composition is skewed to low complexity. The tract at residues Ser888–Glu966 is disordered. Residues Thr907 and Thr909 each carry the phosphothreonine modification. Ser910, Ser929, Ser963, Ser1382, Ser1420, Ser1422, Ser1424, and Ser1428 each carry phosphoserine. Residues Ser942–Glu966 are compositionally biased toward polar residues. The DOCKER domain maps to Lys1668–Pro2104. Lys1952 bears the N6-acetyllysine mark. The stretch at Asp2076–Lys2102 forms a coiled coil. Ser2119 bears the Phosphoserine mark.

Belongs to the DOCK family. In terms of assembly, component of the DOCK7-induced septin displacement/DISP complex, at least composed of DOCK7, LRCH3 and MYO6. Interacts with TSC1. Interacts with nucleotide-free RAC1 and RAC3. Interacts with TACC3. Interacts with CRY1. Interacts with NOD2.

Its subcellular location is the cell projection. The protein localises to the axon. Functionally, functions as a guanine nucleotide exchange factor (GEF), which activates Rac1 and Rac3 Rho small GTPases by exchanging bound GDP for free GTP. Does not have a GEF activity for CDC42. Required for STMN1 'Ser-15' phosphorylation during axon formation and consequently for neuronal polarization. As part of the DISP complex, may regulate the association of septins with actin and thereby regulate the actin cytoskeleton. Has a role in pigmentation. Involved in the regulation of cortical neurogenesis through the control of radial glial cells (RGCs) proliferation versus differentiation; negatively regulates the basal-to-apical interkinetic nuclear migration of RGCs by antagonizing the microtubule growth-promoting function of TACC3. This chain is Dedicator of cytokinesis protein 7 (Dock7), found in Mus musculus (Mouse).